Consider the following 275-residue polypeptide: Large ribosomal subunit protein uL2 (275 aa).

Residues 224–257 are disordered; that stretch reads AMNPIDHPHGGGEGRTAAGRDPVSPWGTPTKGFR.

It belongs to the universal ribosomal protein uL2 family. In terms of assembly, part of the 50S ribosomal subunit. Forms a bridge to the 30S subunit in the 70S ribosome.

Functionally, one of the primary rRNA binding proteins. Required for association of the 30S and 50S subunits to form the 70S ribosome, for tRNA binding and peptide bond formation. It has been suggested to have peptidyltransferase activity; this is somewhat controversial. Makes several contacts with the 16S rRNA in the 70S ribosome. The chain is Large ribosomal subunit protein uL2 from Burkholderia mallei (strain NCTC 10247).